Here is a 174-residue protein sequence, read N- to C-terminus: Crossover junction endodeoxyribonuclease RuvC (174 aa).

Residues Asp16, Glu76, and Asp148 contribute to the active site. Residues Asp16, Glu76, and Asp148 each coordinate Mg(2+).

Belongs to the RuvC family. Homodimer which binds Holliday junction (HJ) DNA. The HJ becomes 2-fold symmetrical on binding to RuvC with unstacked arms; it has a different conformation from HJ DNA in complex with RuvA. In the full resolvosome a probable DNA-RuvA(4)-RuvB(12)-RuvC(2) complex forms which resolves the HJ. Mg(2+) serves as cofactor.

Its subcellular location is the cytoplasm. It catalyses the reaction Endonucleolytic cleavage at a junction such as a reciprocal single-stranded crossover between two homologous DNA duplexes (Holliday junction).. Functionally, the RuvA-RuvB-RuvC complex processes Holliday junction (HJ) DNA during genetic recombination and DNA repair. Endonuclease that resolves HJ intermediates. Cleaves cruciform DNA by making single-stranded nicks across the HJ at symmetrical positions within the homologous arms, yielding a 5'-phosphate and a 3'-hydroxyl group; requires a central core of homology in the junction. The consensus cleavage sequence is 5'-(A/T)TT(C/G)-3'. Cleavage occurs on the 3'-side of the TT dinucleotide at the point of strand exchange. HJ branch migration catalyzed by RuvA-RuvB allows RuvC to scan DNA until it finds its consensus sequence, where it cleaves and resolves the cruciform DNA. The protein is Crossover junction endodeoxyribonuclease RuvC of Rhodopseudomonas palustris (strain ATCC BAA-98 / CGA009).